A 365-amino-acid polypeptide reads, in one-letter code: Aminomethyltransferase (365 aa).

This sequence belongs to the GcvT family. As to quaternary structure, the glycine cleavage system is composed of four proteins: P, T, L and H.

It carries out the reaction N(6)-[(R)-S(8)-aminomethyldihydrolipoyl]-L-lysyl-[protein] + (6S)-5,6,7,8-tetrahydrofolate = N(6)-[(R)-dihydrolipoyl]-L-lysyl-[protein] + (6R)-5,10-methylene-5,6,7,8-tetrahydrofolate + NH4(+). Its function is as follows. The glycine cleavage system catalyzes the degradation of glycine. In Yersinia pseudotuberculosis serotype O:1b (strain IP 31758), this protein is Aminomethyltransferase.